Consider the following 402-residue polypeptide: Chorismate synthase (402 aa).

R40 and R46 together coordinate NADP(+). Residues 134 to 136, 255 to 256, G299, 314 to 318, and R340 contribute to the FMN site; these read RAS, QA, and KPIAT.

It belongs to the chorismate synthase family. Homotetramer. Requires FMNH2 as cofactor.

It carries out the reaction 5-O-(1-carboxyvinyl)-3-phosphoshikimate = chorismate + phosphate. It functions in the pathway metabolic intermediate biosynthesis; chorismate biosynthesis; chorismate from D-erythrose 4-phosphate and phosphoenolpyruvate: step 7/7. Catalyzes the anti-1,4-elimination of the C-3 phosphate and the C-6 proR hydrogen from 5-enolpyruvylshikimate-3-phosphate (EPSP) to yield chorismate, which is the branch point compound that serves as the starting substrate for the three terminal pathways of aromatic amino acid biosynthesis. This reaction introduces a second double bond into the aromatic ring system. The sequence is that of Chorismate synthase from Leifsonia xyli subsp. xyli (strain CTCB07).